The chain runs to 858 residues: Protein 4.1 (858 aa).

The interval 1–125 (MTTEKSLAAE…KEIELGNSLD (125 aa)) is disordered. Ser-14 carries the post-translational modification Phosphoserine. A compositionally biased stretch (low complexity) spans 31-50 (QQETQLEEASQAAAAEGSDQ). Thr-62 bears the Phosphothreonine mark. Residues 63–77 (PTHEDLTKNKERTSE) are compositionally biased toward basic and acidic residues. The span at 78–89 (SRGLSRLLSSFL) shows a compositional bias: low complexity. 8 positions are modified to phosphoserine: Ser-86, Ser-87, Ser-97, Ser-106, Ser-123, Ser-151, Ser-153, and Ser-154. The segment covering 103 to 119 (EVESEKEKGEGGQKEIE) has biased composition (basic and acidic residues). The interval 155 to 208 (IETQPAQEEHREDPDSETKEGEGIEECSGTEVKEDPESRAEREPEASQKPVRRH) is disordered. 2 stretches are compositionally biased toward basic and acidic residues: residues 161–176 (QEEH…KEGE) and 185–200 (EVKE…EPEA). Ser-192 bears the Phosphoserine mark. In terms of domain architecture, FERM spans 211-492 (MHCKVSLLDD…EHHTFFRLTS (282 aa)). Tyr-223 is modified (phosphotyrosine). The residue at position 379 (Thr-379) is a Phosphothreonine. A hydrophilic region spans residues 495 to 608 (TIPKSKFLAL…PAEPEPTEAW (114 aa)). The tract at residues 518–636 (TRQASALIDR…TQKLAGKGED (119 aa)) is disordered. A phosphoserine mark is found at Ser-522, Ser-541, Ser-543, and Ser-556. Basic and acidic residues-rich tracts occupy residues 581–595 (TPKE…RGEE) and 606–615 (EAWKVEKTHT). Residues 609–707 (KVEKTHTEVT…WDKRLSTHSP (99 aa)) are spectrin--actin-binding. Over residues 616–629 (EVTVPTSNGDQTQK) the composition is skewed to polar residues. A Phosphotyrosine modification is found at Tyr-654. A phosphoserine mark is found at Ser-658, Ser-668, Ser-678, Ser-703, and Ser-706. The segment at 710–858 (TLNINGQVPT…VHQETEISEE (149 aa)) is C-terminal (CTD). Phosphothreonine is present on residues Thr-730 and Thr-853.

Binds with a high affinity to glycophorin and with lower affinity to band III protein. Associates with the nuclear mitotic apparatus. Binds calmodulin, CPAP and DLG1. Also found to associate with contractile apparatus and tight junctions. Interacts with NUMA1; this interaction is negatively regulated by CDK1 during metaphase and promotes anaphase-specific localization of NUMA1 in symmetrically dividing cells. Interacts with ATP2B1; regulates small intestinal calcium absorption through regulation of membrane expression of ATP2B1. O-glycosylated; contains N-acetylglucosamine side chains in the C-terminal domain. Post-translationally, phosphorylated at multiple sites by different protein kinases and each phosphorylation event selectively modulates the protein's functions. In terms of processing, phosphorylation on Tyr-654 reduces the ability of 4.1 to promote the assembly of the spectrin/actin/4.1 ternary complex.

Its subcellular location is the nucleus. It localises to the cytoplasm. The protein localises to the cytoskeleton. It is found in the cell cortex. Functionally, protein 4.1 is a major structural element of the erythrocyte membrane skeleton. It plays a key role in regulating membrane physical properties of mechanical stability and deformability by stabilizing spectrin-actin interaction. Recruits DLG1 to membranes. Required for dynein-dynactin complex and NUMA1 recruitment at the mitotic cell cortex during anaphase. In Mus musculus (Mouse), this protein is Protein 4.1.